A 268-amino-acid polypeptide reads, in one-letter code: Dioscorin DB3S (268 aa).

An Alpha-carbonic anhydrase domain is found at 25–259 (DEFSYIEGNP…TNFRSVFYFE (235 aa)). A disulfide bond links C50 and C209. Catalysis depends on H91, which acts as the Proton acceptor. Residues D92, 117 to 119 (HFH), Q136, and 205 to 206 (TA) contribute to the L-ascorbate site.

The protein belongs to the alpha-class carbonic anhydrase family. In terms of assembly, monomer. Homodimer. In terms of processing, not glycosylated. In terms of tissue distribution, expressed in tuber (at protein level).

The catalysed reaction is hydrogencarbonate + H(+) = CO2 + H2O. It catalyses the reaction 2 monodehydro-L-ascorbate radical + NADH + H(+) = 2 L-ascorbate + NAD(+). Functionally, storage protein of tuber. Involved in protection against oxidative stress. Has carbonate dehydratase and weak trypsin inhibitor activity detected by measuring the dehydration of sodium bicarbonate and the inhibition of trypsin-catalyzed hydrolysis of N-benzoyl-L-arginine-4-nitro anilide, respectively. Contrarily, no carbonate dehydratase or trypsin inhibitor activity detected by measuring the hydrolysis of 4-nitrophenyl acetate or the inhibition of bovine trypsin-catalyzed hydrolysis of N-benzoyl-L-arginine ethyl ester, respectively. Has dehydroascorbate (DHA) reductase and monodehydroascorbate (MDA) reductase activities. Catalyzes the reactions of carbonate dehydratase and DHA reductase independently of zinc and glutathione (GSH). The coupled reaction is capable of recycling a plant antioxidant ascorbate using ubiquitous compounds H(2)O and CO(2). Exhibits antioxidant activity. Able to scavenge 1,1-diphenyl-2-picrylhydrazyl (DPPH) radical and hydroxyl radicals. Exhibits immunomodulatory activity. Activates Toll-like receptor 4 signaling pathways by up-regulating the gene expression of pro-inflammatory cytokines, such as tumor necrosis factor alpha, interleukin-1 beta and interleukin-6, and chemokines RANTES and MCP-1, in mouse RAW 264.7 macrophages. Stimulates the phagocytosis of E.coli by the LPS-treated mouse macrophages. This Dioscorea polystachya (Chinese yam) protein is Dioscorin DB3S.